Reading from the N-terminus, the 125-residue chain is Calcitonin receptor-stimulating peptide 1 (125 aa).

The signal sequence occupies residues 1–25 (MGFWKFPPFLVLSILVLYQAGMFHA). A propeptide spanning residues 26-77 (APFRSVFDGRFDPATLDEEESRLLLAAMVNDYEQMRARESEKAQKTEGSRIQ) is cleaved from the precursor. Residues Cys-81 and Cys-86 are joined by a disulfide bond.

The protein belongs to the calcitonin family.

It localises to the secreted. Functionally, stimulates cAMP production in porcine kidney cell line LLC-PK1 via the calcitonin receptor (CT) but not via the CT-like (CL) receptor. The sequence is that of Calcitonin receptor-stimulating peptide 1 (CRSP1) from Bos taurus (Bovine).